Reading from the N-terminus, the 583-residue chain is Radixin (583 aa).

The FERM domain maps to 5 to 295 (INVRVTTMDA…GNHELYMRRR (291 aa)). 60–63 (KLNK) provides a ligand contact to a 1,2-diacyl-sn-glycero-3-phospho-(1D-myo-inositol). Position 83 is an N6-succinyllysine (lysine 83). Lysine 278 contacts a 1,2-diacyl-sn-glycero-3-phospho-(1D-myo-inositol). Disordered stretches follow at residues 309-336 (AREE…AEKE), 374-407 (ELDQ…AKQA), and 460-526 (KEEL…RVKK). Basic and acidic residues predominate over residues 374–400 (ELDQERKRAKEEAERLEKERQAAEEAK). Over residues 469-480 (APPPPPPPPVIP) the composition is skewed to pro residues. Composition is skewed to basic and acidic residues over residues 483–492 (ENEHDEHDEN) and 506–525 (MNHR…ERVK). Threonine 564 carries the phosphothreonine; by ROCK2 modification.

Interacts with CPNE1 (via VWFA domain) and CPNE4 (via VWFA domain). Binds NHERF1. Interacts with NHERF1, NHERF2, LAYN, MME/NEP and ICAM2. Interacts (via FERM domain) with SPN/CD43 cytoplasmic tail. Interacts with CD44. Interacts with CLIC5; may work together in a complex which also includes EZR and MYO6 to stabilize linkages between the plasma membrane and subjacent actin cytoskeleton at the base of stereocilia. Post-translationally, phosphorylated by tyrosine-protein kinases. Phosphorylation by ROCK2 suppresses the head-to-tail association of the N-terminal and C-terminal halves resulting in an opened conformation which is capable of actin and membrane-binding.

It is found in the cell membrane. The protein localises to the cytoplasm. Its subcellular location is the cytoskeleton. The protein resides in the cleavage furrow. It localises to the cell projection. It is found in the microvillus. The protein localises to the stereocilium. A head-to-tail association, of the N-terminal and C-terminal halves results in a closed conformation (inactive form) which is incapable of actin or membrane-binding. Its function is as follows. Probably plays a crucial role in the binding of the barbed end of actin filaments to the plasma membrane. This Bos taurus (Bovine) protein is Radixin (RDX).